Reading from the N-terminus, the 216-residue chain is Adenylate kinase (216 aa).

13-18 (GAGKGT) serves as a coordination point for ATP. The tract at residues 33 to 66 (TTGDALRANKDMDISDMDTEYDTPREYMEAGDLV) is NMP. AMP-binding positions include Thr34, Arg39, 64-66 (DLV), 89-92 (GYPR), and Gln96. The interval 125 to 162 (GRRVCDDCGTNYHVEFNQPEEDGVCDECGGDLIQRDDD) is LID. ATP is bound at residue Arg126. Zn(2+)-binding residues include Cys129, Cys132, Cys149, and Cys152. The AMP site is built by Arg159 and Arg170. Gln198 is an ATP binding site.

Belongs to the adenylate kinase family. Monomer.

It localises to the cytoplasm. The catalysed reaction is AMP + ATP = 2 ADP. Its pathway is purine metabolism; AMP biosynthesis via salvage pathway; AMP from ADP: step 1/1. In terms of biological role, catalyzes the reversible transfer of the terminal phosphate group between ATP and AMP. Plays an important role in cellular energy homeostasis and in adenine nucleotide metabolism. This Haloarcula marismortui (strain ATCC 43049 / DSM 3752 / JCM 8966 / VKM B-1809) (Halobacterium marismortui) protein is Adenylate kinase.